Reading from the N-terminus, the 143-residue chain is Hemoglobin subunit alpha-1 (143 aa).

An N-acetylserine modification is found at Ser2. In terms of domain architecture, Globin spans 2-143 (SLTEKDKAAV…VSLALAERYR (142 aa)). His60 is a binding site for O2. His89 is a binding site for heme b.

It belongs to the globin family. In terms of assembly, hb 1 is a heterotetramer of two alpha-1 and two beta chains. In terms of tissue distribution, red blood cells.

Involved in oxygen transport from gills to the various peripheral tissues. The protein is Hemoglobin subunit alpha-1 (hba1) of Cottoperca gobio (Frogmouth).